The sequence spans 185 residues: Ribosome-recycling factor (185 aa).

The segment at 136–155 is disordered; sequence NDDLKKLEKNGDITEDELRA.

It belongs to the RRF family.

It localises to the cytoplasm. Responsible for the release of ribosomes from messenger RNA at the termination of protein biosynthesis. May increase the efficiency of translation by recycling ribosomes from one round of translation to another. This is Ribosome-recycling factor from Bacillus velezensis (strain DSM 23117 / BGSC 10A6 / LMG 26770 / FZB42) (Bacillus amyloliquefaciens subsp. plantarum).